The chain runs to 372 residues: Alpha-parvin (372 aa).

The segment covering 1-11 has biased composition (low complexity); it reads MATSPQKSPSV. Residues 1 to 44 form a disordered region; the sequence is MATSPQKSPSVPKSPTPKSPPSRKKDDSFLGKLGGTLARRKKAK. Residue Ala-2 is modified to N-acetylalanine. Phosphoserine is present on residues Ser-8, Ser-14, and Ser-19. Positions 21-25 are interaction with ARHGAP31; sequence PSRKK. Residues Ser-28 and Ser-62 each carry the phosphoserine modification. Calponin-homology (CH) domains follow at residues 95 to 202 and 262 to 369; these read QELM…QYFR and NVVK…TKYR. Positions 223 to 372 are required for interaction with TESK1 and ILK; it reads GILQSRQIQE…NLFTKYRNVE (150 aa).

It belongs to the parvin family. Component of the heterotrimeric IPP (ILK-PINCH-PARVIN) complex composed of ILK, LIMS1/PINCH and PARVA; the complex binds to F-actin via the C-terminal tail of LIMS1 and the N-terminal region of PARVA, promoting F-actin filament bundling. Interacts with TGFB1I1. Interacts with ARHGAP31. Interacts with the actin cytoskeleton. Interacts (via C-terminus) with TESK1 (via C-terminus); the interaction inhibits TESK1 kinase activity. Interacts with PXN/PAXILLIN (via LD motif 4). In terms of tissue distribution, widely expressed.

It is found in the cell junction. It localises to the focal adhesion. Its subcellular location is the cell membrane. The protein localises to the cytoplasm. The protein resides in the cytoskeleton. It is found in the myofibril. It localises to the sarcomere. Its subcellular location is the z line. Its function is as follows. Plays a role in sarcomere organization and in smooth muscle cell contraction. Required for normal development of the embryonic cardiovascular system, and for normal septation of the heart outflow tract. Plays a role in sprouting angiogenesis and is required for normal adhesion of vascular smooth muscle cells to endothelial cells during blood vessel development. Plays a role in the reorganization of the actin cytoskeleton, formation of lamellipodia and ciliogenesis. Plays a role in the establishment of cell polarity, cell adhesion, cell spreading, and directed cell migration. Within the IPP (ILK-PINCH-PARVIN) complex, binds to F-actin, promoting F-actin bundling, a process required to generate force for actin cytoskeleton reorganization and subsequent dynamic cell adhesion events such as cell spreading and migration. This Rattus norvegicus (Rat) protein is Alpha-parvin (Parva).